A 704-amino-acid polypeptide reads, in one-letter code: Elongation factor G (704 aa).

In terms of domain architecture, tr-type G spans 8-290; that stretch reads EKYRNIGICA…GVVRYLPAPN (283 aa). GTP-binding positions include 17–24, 88–92, and 142–145; these read AHVDAGKT, DTPGH, and NKMD.

This sequence belongs to the TRAFAC class translation factor GTPase superfamily. Classic translation factor GTPase family. EF-G/EF-2 subfamily.

The protein resides in the cytoplasm. Catalyzes the GTP-dependent ribosomal translocation step during translation elongation. During this step, the ribosome changes from the pre-translocational (PRE) to the post-translocational (POST) state as the newly formed A-site-bound peptidyl-tRNA and P-site-bound deacylated tRNA move to the P and E sites, respectively. Catalyzes the coordinated movement of the two tRNA molecules, the mRNA and conformational changes in the ribosome. In Francisella tularensis subsp. holarctica (strain FTNF002-00 / FTA), this protein is Elongation factor G.